A 148-amino-acid polypeptide reads, in one-letter code: Small ribosomal subunit protein uS13 (148 aa).

The protein belongs to the universal ribosomal protein uS13 family. In terms of assembly, part of the 30S ribosomal subunit. Forms a loose heterodimer with protein S19. Forms two bridges to the 50S subunit in the 70S ribosome.

Functionally, located at the top of the head of the 30S subunit, it contacts several helices of the 16S rRNA. In the 70S ribosome it contacts the 23S rRNA (bridge B1a) and protein L5 of the 50S subunit (bridge B1b), connecting the 2 subunits; these bridges are implicated in subunit movement. The chain is Small ribosomal subunit protein uS13 from Pyrococcus horikoshii (strain ATCC 700860 / DSM 12428 / JCM 9974 / NBRC 100139 / OT-3).